A 1260-amino-acid chain; its full sequence is Ankyrin repeat and sterile alpha motif domain-containing protein 1B (1260 aa).

7 ANK repeats span residues glycine 2–leucine 31, serine 58–valine 87, lysine 91–arginine 120, glutamate 127–isoleucine 156, lysine 160–serine 189, arginine 193–cysteine 222, and glutamate 225–isoleucine 254. Residues histidine 298–threonine 326 are disordered. Residues glutamate 306–threonine 326 show a composition bias toward polar residues. Residues serine 310, serine 311, serine 315, serine 354, and serine 365 each carry the phosphoserine modification. Disordered stretches follow at residues glutamate 368–proline 402, proline 491–aspartate 513, and glycine 556–leucine 642. Residues asparagine 372–leucine 385 show a composition bias toward polar residues. At threonine 504 the chain carries Phosphothreonine. 2 positions are modified to phosphoserine: serine 508 and serine 511. A compositionally biased stretch (low complexity) spans glycine 556–threonine 575. Over residues threonine 576–aspartate 588 the composition is skewed to basic and acidic residues. Phosphoserine is present on serine 739. Residues valine 754–serine 778 form a disordered region. Threonine 773 is modified (phosphothreonine). Position 775 is a phosphoserine (serine 775). SAM domains are found at residues cysteine 810 to methionine 876 and tyrosine 884 to glutamate 949. Tyrosine 901 carries the post-translational modification Phosphotyrosine. The short motif at histidine 935–arginine 938 is the Nuclear localization signal element. The disordered stretch occupies residues arginine 946–aspartate 989. Residues threonine 969–threonine 984 show a composition bias toward low complexity. Serine 974 carries the phosphoserine modification. Tyrosine 1007 carries the post-translational modification Phosphotyrosine. The region spanning isoleucine 1056 to isoleucine 1213 is the PID domain. The tract at residues histidine 1197 to arginine 1217 is disordered.

Interacts with EPHA8. Isoform 2 interacts with COIL. Isoform 3 interacts with DLG4. Nuclear translocation of isoform 3 requires an NMDAR-dependent proteolytic cleavage. A 35 kDa N-terminal form shuttles to the nucleus. In terms of tissue distribution, isoform 3 is brain specific and highly enriched in the postsynaptic densities (PSDs), especially in cortical, striatal and hippocampal PSDs.

It is found in the cytoplasm. Its subcellular location is the nucleus. It localises to the postsynaptic density. The protein resides in the cell projection. The protein localises to the dendritic spine. It is found in the cajal body. Its function is as follows. Isoform 2 may participate in the regulation of nucleoplasmic coilin protein interactions in neuronal and transformed cells. In terms of biological role, isoform 3 can regulate global protein synthesis by altering nucleolar numbers. The protein is Ankyrin repeat and sterile alpha motif domain-containing protein 1B (Anks1b) of Rattus norvegicus (Rat).